A 107-amino-acid chain; its full sequence is Thioredoxin (107 aa).

The region spanning Asp-2–Xaa-107 is the Thioredoxin domain. Cys-32 and Cys-35 are joined by a disulfide.

Belongs to the thioredoxin family.

Participates in various redox reactions through the reversible oxidation of its active center dithiol to a disulfide and catalyzes dithiol-disulfide exchange reactions. The chain is Thioredoxin (trxA) from Allochromatium vinosum (Chromatium vinosum).